Here is a 60-residue protein sequence, read N- to C-terminus: Large ribosomal subunit protein bL33 (60 aa).

Belongs to the bacterial ribosomal protein bL33 family.

This Cytophaga hutchinsonii (strain ATCC 33406 / DSM 1761 / CIP 103989 / NBRC 15051 / NCIMB 9469 / D465) protein is Large ribosomal subunit protein bL33.